Here is a 195-residue protein sequence, read N- to C-terminus: Replication restart protein PriC (195 aa).

This sequence belongs to the PriC family. Monomer. Component of the replication restart primosome, which is composed of PriA, PriB, PriC, DnaB and DnaT; DnaG primase associates transiently with this complex. Interacts with the C-terminus of SSB; this interaction is required to load the main replicative helicase onto substrate replication forks. Interacts with helicase DnaB alone and in the DnaB-DnaC complex, probably 1:1 binding with DnaB.

Functionally, involved in the restart of stalled replication forks, which reloads the DnaB replicative helicase on sites other than the origin of replication. Recognizes abandoned replication forks and remodels DNA single-stranded binding protein (SSB) on ssDNA to uncover a loading site for DnaB. There are several restart pathways, the PriA-PriC pathway is a minor restart pathway. Part of the minor PriC-Rep pathway for restart of stalled replication forks, which has a different substrate specificity than PriA. Part of the major restart pathway with PriA, PriB, DnaB, DnaT and DnaG primase. priB and priC have redundant roles in the cell. The polypeptide is Replication restart protein PriC (Haemophilus influenzae (strain ATCC 51907 / DSM 11121 / KW20 / Rd)).